The primary structure comprises 753 residues: Ribosome biogenesis protein BOP1 homolog (753 aa).

The tract at residues M1 to K155 is disordered. Composition is skewed to basic and acidic residues over residues G7–S18 and K30–D41. Composition is skewed to acidic residues over residues D64–D75 and E83–G109. Residues S110–H121 are compositionally biased toward basic and acidic residues. Over residues G122–E142 the composition is skewed to acidic residues. WD repeat units lie at residues G421–Q462, D464–Q502, R539–L581, T626–K665, N669–Q708, and S722–H753.

The protein belongs to the WD repeat BOP1/ERB1 family. Interacts with PES. Interacts with WDR12.

It localises to the nucleus. The protein localises to the nucleolus. Its subcellular location is the nucleoplasm. In terms of biological role, required for maturation of ribosomal RNAs and formation of the large ribosomal subunit. Plays an essential role in cell growth and survival through its regulation of ribosome biogenesis and mitotic progression. This is Ribosome biogenesis protein BOP1 homolog from Arabidopsis thaliana (Mouse-ear cress).